A 627-amino-acid chain; its full sequence is (-)-alpha-terpineol synthase, chloroplastic (627 aa).

The transit peptide at M1 to S52 directs the protein to the chloroplast. Mg(2+) contacts are provided by D378, D382, and D530. The short motif at D378–D382 is the DDXXD motif element.

It belongs to the terpene synthase family. Tpsd subfamily. The cofactor is Mg(2+). Mn(2+) is required as a cofactor.

Its subcellular location is the plastid. The protein resides in the chloroplast. It catalyses the reaction (2E)-geranyl diphosphate + H2O = (S)-alpha-terpineol + diphosphate. Its pathway is terpene metabolism; oleoresin biosynthesis. Involved in defensive oleoresin formation in conifers in response to insect attack or other injury. Involved in monoterpene (C10) olefins biosynthesis. Produces 57.3% alpha-terpineol (15.1% (+)/84.9% (-)), 27.6% limonene (25.2% (+)/74.8% (-)), 8% terpinolene, 4.7% beta-pinene (14.8% (+)/85.2% (-)), 1.3% alpha-pinene (100% (+)) and 1.1% myrcene. This Pinus taeda (Loblolly pine) protein is (-)-alpha-terpineol synthase, chloroplastic (PT10).